We begin with the raw amino-acid sequence, 394 residues long: ATP phosphoribosyltransferase regulatory subunit (394 aa).

This sequence belongs to the class-II aminoacyl-tRNA synthetase family. HisZ subfamily. In terms of assembly, heteromultimer composed of HisG and HisZ subunits.

It is found in the cytoplasm. It functions in the pathway amino-acid biosynthesis; L-histidine biosynthesis; L-histidine from 5-phospho-alpha-D-ribose 1-diphosphate: step 1/9. In terms of biological role, required for the first step of histidine biosynthesis. May allow the feedback regulation of ATP phosphoribosyltransferase activity by histidine. The polypeptide is ATP phosphoribosyltransferase regulatory subunit (Geobacillus kaustophilus (strain HTA426)).